Reading from the N-terminus, the 366-residue chain is Endogenous Bornavirus-like nucleoprotein 1 (366 aa).

Residues 1–15 (MSRPRNNPQTSSPQD) are compositionally biased toward polar residues. The segment at 1–22 (MSRPRNNPQTSSPQDSTKDGSS) is disordered.

In terms of tissue distribution, expression detected by RT-PCR in a few cell lines, including OL, HEK293T and MOLT-4. Not observed in HeLa cells.

Functionally, may act as an RNA-binding protein. Highly homologous to the bornavirus nucleocapsid N protein that binds viral RNA and oligomerizes. The chain is Endogenous Bornavirus-like nucleoprotein 1 (EBLN1) from Homo sapiens (Human).